The primary structure comprises 184 residues: GTPase RhebL1 (184 aa).

GTP-binding positions include 16–21 (SVGKTS), 32–38 (LEGYDPT), G63, 119–122 (NKAD), and 149–150 (SA). An Effector region motif is present at residues 35–43 (YDPTVENTY). T38 serves as a coordination point for Mg(2+). C181 carries the cysteine methyl ester modification. C181 is lipidated: S-farnesyl cysteine. Residues 182 to 184 (YLM) constitute a propeptide, removed in mature form.

Belongs to the small GTPase superfamily. Rheb family. In terms of assembly, interacts with MTOR.

The protein resides in the endomembrane system. The protein localises to the cytoplasm. It carries out the reaction GTP + H2O = GDP + phosphate + H(+). Functionally, binds GTP and exhibits intrinsic GTPase activity. May activate NF-kappa-B-mediated gene transcription. Promotes signal transduction through MTOR, activates RPS6KB1, and is a downstream target of the small GTPase-activating proteins TSC1 and TSC2. The chain is GTPase RhebL1 (Rhebl1) from Mus musculus (Mouse).